Here is a 198-residue protein sequence, read N- to C-terminus: Potassium-transporting ATPase KdpC subunit (198 aa).

Residues 8 to 28 form a helical membrane-spanning segment; it reads ILAVLVFTILCGIIYPVSTTV.

Belongs to the KdpC family. The system is composed of three essential subunits: KdpA, KdpB and KdpC.

The protein localises to the cell membrane. In terms of biological role, part of the high-affinity ATP-driven potassium transport (or Kdp) system, which catalyzes the hydrolysis of ATP coupled with the electrogenic transport of potassium into the cytoplasm. This subunit acts as a catalytic chaperone that increases the ATP-binding affinity of the ATP-hydrolyzing subunit KdpB by the formation of a transient KdpB/KdpC/ATP ternary complex. This is Potassium-transporting ATPase KdpC subunit from Clostridium perfringens (strain ATCC 13124 / DSM 756 / JCM 1290 / NCIMB 6125 / NCTC 8237 / Type A).